A 451-amino-acid chain; its full sequence is Nicotinamide phosphoribosyltransferase (451 aa).

R209 is a binding site for diphosphate. Beta-nicotinamide D-ribonucleotide is bound at residue D232. Diphosphate is bound by residues H248 and R309. Residues 309–311 (RPD), 364–365 (GD), and R403 each bind beta-nicotinamide D-ribonucleotide.

Belongs to the NAPRTase family.

The enzyme catalyses beta-nicotinamide D-ribonucleotide + diphosphate = 5-phospho-alpha-D-ribose 1-diphosphate + nicotinamide + H(+). Its pathway is cofactor biosynthesis; NAD(+) biosynthesis; nicotinamide D-ribonucleotide from 5-phospho-alpha-D-ribose 1-diphosphate and nicotinamide: step 1/1. Catalyzes the condensation of nicotinamide with 5-phosphoribosyl-1-pyrophosphate to yield nicotinamide mononucleotide, an intermediate in the biosynthesis of NAD. This is Nicotinamide phosphoribosyltransferase from Mycoplasma pneumoniae (strain ATCC 29342 / M129 / Subtype 1) (Mycoplasmoides pneumoniae).